Reading from the N-terminus, the 626-residue chain is MATLNRDQQIEEIINLEAILNLPKGTEHFVSDLHGEFEAFDHILRNGSGRIREKVQFLFKQELNAHQMDELCFIIYYPEEKLTLLENESALSYEWWLLTIRRLVEIVRSSSMKYTRSKVRKALPETYGYILEELIYQYDETTTKNGYYQQIIEKIILLGEAKRFVTELAYLIQRLIIDHLHVIGDIYDRGPAPDKIMDRLMSYHSLDIQLGNHDMIWLAAYSGSLACLANVVRICARYGNLDLLEERYAIDLTALKKFSLETYKENPAFAPKKNPYRALTEAEKQVAMRVQQAIAIIQEKLEGQIIGRRPDFNLAHRLRLDKIQGETITFDECRYTLINSCFQTVSEEQPYQLTREEKQIIDDLLTQFQSSPRLTKHMRFLMEKASLYLVYNQNLLIHGCLPLNADGTFQAYTFKGHSYSGKALVDFFQEMLEEAYAQPASTDDYATDCLWYLWCGEGSSLFGKRAMKTFERYFLAEKETHYEEKNPYYSLRDTVEVCERILDEFEVTGENRHIINGHTPVKRTKGESPIKANGTLLVIDGGFSKSYQTITGIAGYTLLYNSFGLQLTAHKSFSSKETAILNNQDIHSIKQVIDRPLQRLLVKDTTIGKELLKQSQALQKQMKQNQ.

Belongs to the FBPase class 3 family. Mn(2+) serves as cofactor.

It catalyses the reaction beta-D-fructose 1,6-bisphosphate + H2O = beta-D-fructose 6-phosphate + phosphate. It participates in carbohydrate biosynthesis; gluconeogenesis. In Enterococcus faecalis (strain ATCC 700802 / V583), this protein is Fructose-1,6-bisphosphatase class 3.